Consider the following 157-residue polypeptide: Protein Smg homolog (157 aa).

Belongs to the Smg family.

The polypeptide is Protein Smg homolog (Shewanella sediminis (strain HAW-EB3)).